The following is a 309-amino-acid chain: Prephenate dehydratase (309 aa).

One can recognise a Prephenate dehydratase domain in the interval 3–191; it reads GIAYLGPEGT…ARTRFVLVGC (189 aa). In terms of domain architecture, ACT spans 205 to 282; it reads SVVLRLDNVP…ADVRYLGSWP (78 aa).

Homodimer.

It catalyses the reaction prephenate + H(+) = 3-phenylpyruvate + CO2 + H2O. It participates in amino-acid biosynthesis; L-phenylalanine biosynthesis; phenylpyruvate from prephenate: step 1/1. The sequence is that of Prephenate dehydratase (pheA) from Mycolicibacterium gilvum (strain PYR-GCK) (Mycobacterium gilvum (strain PYR-GCK)).